Consider the following 403-residue polypeptide: UPF0284 protein PMT_1350 (403 aa).

This sequence belongs to the UPF0284 family.

The protein is UPF0284 protein PMT_1350 of Prochlorococcus marinus (strain MIT 9313).